A 353-amino-acid polypeptide reads, in one-letter code: Ribosomal RNA small subunit methyltransferase (353 aa).

Residues 1 to 10 show a composition bias toward basic residues; that stretch reads MAGGKIRKEK. The segment at 1 to 23 is disordered; it reads MAGGKIRKEKPKASNRAPSNHYQ. Residues histidine 35, leucine 37, glycine 62, glutamate 83, aspartate 111, and asparagine 126 each coordinate S-adenosyl-L-methionine. The segment at 270 to 313 is disordered; it reads ALNTTSMDLGDQSMGMEDDDNEMDDDDMEMDEGEGDGGETSEFK. The segment covering 285 to 308 has biased composition (acidic residues); the sequence is MEDDDNEMDDDDMEMDEGEGDGGE.

The protein belongs to the class I-like SAM-binding methyltransferase superfamily. rRNA adenine N(6)-methyltransferase family. Expressed in rapidly dividing tissues, including root meristems and lateral root primordia, developing cotyledons and leaves, petals, anther, pollen grains and silique abscission zone.

The protein resides in the nucleus. It localises to the nucleolus. The enzyme catalyses adenosine(1785)/adenosine(1786) in 18S rRNA + 4 S-adenosyl-L-methionine = N(6)-dimethyladenosine(1785)/N(6)-dimethyladenosine(1786) in 18S rRNA + 4 S-adenosyl-L-homocysteine + 4 H(+). N6-adenine methyltransferase which modifies the AA dinucleotide at the plant nuclear 18S rRNA nucleotides A1785 and A1786. Required for generating appropriate patterns of gene expression during root development, including the cell-specific expression of transcriptional regulators involved in root hair and non-hair cells patterning. The chain is Ribosomal RNA small subunit methyltransferase from Arabidopsis thaliana (Mouse-ear cress).